A 353-amino-acid chain; its full sequence is Quinolinate synthase (353 aa).

Iminosuccinate contacts are provided by histidine 49 and serine 70. Position 115 (cysteine 115) interacts with [4Fe-4S] cluster. Iminosuccinate contacts are provided by residues 141-143 (YAN) and serine 158. Cysteine 202 contributes to the [4Fe-4S] cluster binding site. Residues 228–230 (HPE) and threonine 245 contribute to the iminosuccinate site. Residue cysteine 299 participates in [4Fe-4S] cluster binding.

It belongs to the quinolinate synthase family. Type 1 subfamily. [4Fe-4S] cluster serves as cofactor.

It localises to the cytoplasm. The catalysed reaction is iminosuccinate + dihydroxyacetone phosphate = quinolinate + phosphate + 2 H2O + H(+). It functions in the pathway cofactor biosynthesis; NAD(+) biosynthesis; quinolinate from iminoaspartate: step 1/1. Functionally, catalyzes the condensation of iminoaspartate with dihydroxyacetone phosphate to form quinolinate. In Hahella chejuensis (strain KCTC 2396), this protein is Quinolinate synthase.